We begin with the raw amino-acid sequence, 240 residues long: Large ribosomal subunit protein uL2 (240 aa).

Residues 1 to 11 show a composition bias toward polar residues; that stretch reads MGKRLISQNRG. Disordered regions lie at residues 1–28 and 206–240; these read MGKRLISQNRGRGTPKYRSPTHKRKGAV and GGGRHQHLGKPSSVSRHTSPGRKVGHIASRRTGRK. 2 stretches are compositionally biased toward basic residues: residues 13–28 and 224–240; these read GTPKYRSPTHKRKGAV and SPGRKVGHIASRRTGRK.

The protein belongs to the universal ribosomal protein uL2 family. In terms of assembly, part of the 50S ribosomal subunit. Forms a bridge to the 30S subunit in the 70S ribosome.

Its function is as follows. One of the primary rRNA binding proteins. Required for association of the 30S and 50S subunits to form the 70S ribosome, for tRNA binding and peptide bond formation. It has been suggested to have peptidyltransferase activity; this is somewhat controversial. Makes several contacts with the 16S rRNA in the 70S ribosome. This is Large ribosomal subunit protein uL2 from Methanococcus maripaludis (strain C5 / ATCC BAA-1333).